The following is a 968-amino-acid chain: Ribonuclease E (968 aa).

The region spanning 39-119 (SNIYKGKITR…GTKGAALTTF (81 aa)) is the S1 motif domain. Positions 303 and 346 each coordinate Mg(2+). Zn(2+) contacts are provided by Cys-404 and Cys-407. Positions 404 to 407 (CPRC) are required for zinc-mediated homotetramerization and catalytic activity. The disordered stretch occupies residues 947–968 (IKNSAGAHSATNFSTSPVKKSE). The span at 955–968 (SATNFSTSPVKKSE) shows a compositional bias: polar residues.

This sequence belongs to the RNase E/G family. RNase E subfamily. Component of the RNA degradosome, which is a multiprotein complex involved in RNA processing and mRNA degradation. Within the RNA degradosome, RNase E assembles into a homotetramer formed by a dimer of dimers. The cofactor is Zn(2+). Requires Mg(2+) as cofactor.

Its subcellular location is the cytoplasm. The protein localises to the cell inner membrane. It carries out the reaction Endonucleolytic cleavage of single-stranded RNA in A- and U-rich regions.. In terms of biological role, endoribonuclease that plays a central role in RNA processing and decay. Required for the maturation of 5S and 16S rRNAs and the majority of tRNAs. Also involved in the degradation of most mRNAs. The polypeptide is Ribonuclease E (Buchnera aphidicola subsp. Schizaphis graminum (strain Sg)).